A 400-amino-acid polypeptide reads, in one-letter code: Diphosphomevalonate decarboxylase (400 aa).

Residues 19 to 22, R75, 154 to 159, and T210 contribute to the (R)-5-diphosphomevalonate site; these read YWGK and SGSACR. Positions 381–400 are disordered; the sequence is DGPRTLGPEEALLSPDGLPK.

Belongs to the diphosphomevalonate decarboxylase family.

The catalysed reaction is (R)-5-diphosphomevalonate + ATP = isopentenyl diphosphate + ADP + phosphate + CO2. It participates in isoprenoid biosynthesis; isopentenyl diphosphate biosynthesis via mevalonate pathway; isopentenyl diphosphate from (R)-mevalonate: step 3/3. In terms of biological role, diphosphomevalonate decarboxylase; part of the second module of ergosterol biosynthesis pathway that includes the middle steps of the pathway. The second module involves the formation of farnesyl diphosphate, which is also an important intermediate in the biosynthesis of ubiquinone, dolichol, heme and prenylated proteins. This module also plays a key role in the biosynthesis of triterpenes such as ganoderic acids (GA), a group of highly oxygenated lanostane-type triterpenoids which are well recognized as a main group of unique bioactive compounds in the medicinal mushroom Ganoderma lucidum. Activity by the mevalonate kinase first converts mevalonate into 5-phosphomevalonate. 5-phosphomevalonate is then further converted to 5-diphosphomevalonate by the phosphomevalonate kinase. The diphosphomevalonate decarboxylase MVD then produces isopentenyl diphosphate. The isopentenyl-diphosphate delta-isomerase then catalyzes the 1,3-allylic rearrangement of the homoallylic substrate isopentenyl (IPP) to its highly electrophilic allylic isomer, dimethylallyl diphosphate (DMAPP). Finally the farnesyl diphosphate synthase FPS catalyzes the sequential condensation of isopentenyl pyrophosphate with dimethylallyl pyrophosphate, and then with the resultant geranylpyrophosphate to the ultimate product farnesyl pyrophosphate. This is Diphosphomevalonate decarboxylase from Ganoderma lucidum (Ling zhi medicinal fungus).